A 292-amino-acid polypeptide reads, in one-letter code: Pantothenate synthetase (292 aa).

Residue 30 to 37 (MGFLHIGH) coordinates ATP. Residue H37 is the Proton donor of the active site. Position 61 (Q61) interacts with (R)-pantoate. Beta-alanine is bound at residue Q61. 147–150 (GEKD) is a binding site for ATP. Q153 serves as a coordination point for (R)-pantoate. ATP-binding positions include V176 and 184–187 (CSSR).

Belongs to the pantothenate synthetase family. In terms of assembly, homodimer.

The protein localises to the cytoplasm. It catalyses the reaction (R)-pantoate + beta-alanine + ATP = (R)-pantothenate + AMP + diphosphate + H(+). It participates in cofactor biosynthesis; (R)-pantothenate biosynthesis; (R)-pantothenate from (R)-pantoate and beta-alanine: step 1/1. Functionally, catalyzes the condensation of pantoate with beta-alanine in an ATP-dependent reaction via a pantoyl-adenylate intermediate. This Agrobacterium fabrum (strain C58 / ATCC 33970) (Agrobacterium tumefaciens (strain C58)) protein is Pantothenate synthetase.